The chain runs to 363 residues: MNELLLNVVDPLHQWFLGLGDGGVLLWTVLKILLIAVPVIVTVAFYVVWERKLIGWMHVRHGPMYVGMGIFQAFADVFKLLFKEILQPSSSHKAMFIIAPLLTLAPAFAAWSVVPFDAKLVLSNANVGLLYLLAMTSLGVYGIILAGWASNSKYAFLGAMRSAAQVVSYEIAMGFALVGVMIASGSVNLSQIVFAQAGSSGFFDWFLIPLFPLFIVYWVSGVAETNRAPFDVVEGESEIVAGHMVEYSGGAFALFFLAEYANMILVSFLISIFFLGGWLSPIQGWVTADVSPWVNWLWTGGWPWLLMKVFFFASAYIWFRASFPRYRYDQIMRLGWKVFIPLTIVWIAVTALMVFYGVIQKGV.

10 consecutive transmembrane segments (helical) span residues V29–W49, G62–F82, F96–F116, V127–G147, A163–A183, F202–V222, I239–L257, I264–V286, T299–F319, and F339–I359.

It belongs to the complex I subunit 1 family. As to quaternary structure, NDH-1 is composed of 14 different subunits. Subunits NuoA, H, J, K, L, M, N constitute the membrane sector of the complex.

It is found in the cell inner membrane. The catalysed reaction is a quinone + NADH + 5 H(+)(in) = a quinol + NAD(+) + 4 H(+)(out). In terms of biological role, NDH-1 shuttles electrons from NADH, via FMN and iron-sulfur (Fe-S) centers, to quinones in the respiratory chain. The immediate electron acceptor for the enzyme in this species is believed to be ubiquinone. Couples the redox reaction to proton translocation (for every two electrons transferred, four hydrogen ions are translocated across the cytoplasmic membrane), and thus conserves the redox energy in a proton gradient. This subunit may bind ubiquinone. The chain is NADH-quinone oxidoreductase subunit H from Xanthomonas campestris pv. campestris (strain B100).